The following is a 397-amino-acid chain: Nuclear egress protein 2 (397 aa).

At 1–358 (MEMNKVLHQD…GPSRPQSGPW (358 aa)) the chain is on the perinuclear space side. 2 disordered regions span residues 205–245 (RTAG…PPPP) and 291–332 (AAAG…PSLE). A Phosphoserine modification is found at serine 216. Composition is skewed to low complexity over residues 224–239 (PSCS…AAAG) and 291–301 (AAAGQDVGGSA). Over residues 310–322 (SRRRGVSTHHRHP) the composition is skewed to basic residues. The helical transmembrane segment at 359–381 (LPARFATLGPLVLALLLVLALLW) threads the bilayer. At 382 to 397 (RGHGQSSSPTRSAHRD) the chain is on the nuclear side.

The protein belongs to the herpesviridae NEC2 protein family. In terms of assembly, forms a heterohexameric complex with NEC1. Interacts with host UBA7 and RNF170; this interaction promotes UBA7 proteasomal degradation. Phosphorylated. Phosphorylation by viral kinase UL97 at Ser-216 plays an important role for correct viral nuclear egress complex (NEC) localization.

It localises to the host nucleus inner membrane. Plays an essential role in virion nuclear egress, the first step of virion release from infected cell. Within the host nucleus, NEC1 interacts with the newly formed capsid through the vertexes and directs it to the inner nuclear membrane by associating with NEC2. Induces the budding of the capsid at the inner nuclear membrane as well as its envelopment into the perinuclear space. There, the NEC1/NEC2 complex promotes the fusion of the enveloped capsid with the outer nuclear membrane and the subsequent release of the viral capsid into the cytoplasm where it will reach the secondary budding sites in the host Golgi or trans-Golgi network. Inhibits host ISGylation and subsequent innate antiviral response by targeting host UBA7 for proteasomal degradation. The polypeptide is Nuclear egress protein 2 (Human cytomegalovirus (strain AD169) (HHV-5)).